A 71-amino-acid chain; its full sequence is Large ribosomal subunit protein bL31 (71 aa).

4 residues coordinate Zn(2+): Cys16, Cys18, Cys38, and Cys41.

Belongs to the bacterial ribosomal protein bL31 family. Type A subfamily. In terms of assembly, part of the 50S ribosomal subunit. Requires Zn(2+) as cofactor.

Its function is as follows. Binds the 23S rRNA. This chain is Large ribosomal subunit protein bL31, found in Laribacter hongkongensis (strain HLHK9).